Consider the following 274-residue polypeptide: MQKVVKLNNIKIGNDLPFVLIAGPCQIEGKDHALFMAEKLVKLTSKLEIPFIYKSSFDKANRTSVNGIRGLGIEKGLEILSKVKSEFDCPIVTDVHSESQCTETAEIADILQIPAFLCRQTDLLQAAAKTGKIVKVKKGQFLAPWDMKNVQTKLEAFGVKDILFTERGACFGYNNLVSDMRSLAIIAELNVPVVFDATHSVQQPGGLGGSTGGERKYVELLAKAATAVGIAGMYMEVHQDPDNAPSDGPCMIKLDNLESILIKLKKYDKITKEK.

It belongs to the KdsA family.

The protein resides in the cytoplasm. The enzyme catalyses D-arabinose 5-phosphate + phosphoenolpyruvate + H2O = 3-deoxy-alpha-D-manno-2-octulosonate-8-phosphate + phosphate. The protein operates within carbohydrate biosynthesis; 3-deoxy-D-manno-octulosonate biosynthesis; 3-deoxy-D-manno-octulosonate from D-ribulose 5-phosphate: step 2/3. It functions in the pathway bacterial outer membrane biogenesis; lipopolysaccharide biosynthesis. This is 2-dehydro-3-deoxyphosphooctonate aldolase from Rickettsia felis (strain ATCC VR-1525 / URRWXCal2) (Rickettsia azadi).